A 267-amino-acid polypeptide reads, in one-letter code: Tryptophan synthase alpha chain (267 aa).

Residues E43 and D54 each act as proton acceptor in the active site.

It belongs to the TrpA family. Tetramer of two alpha and two beta chains.

The enzyme catalyses (1S,2R)-1-C-(indol-3-yl)glycerol 3-phosphate + L-serine = D-glyceraldehyde 3-phosphate + L-tryptophan + H2O. The protein operates within amino-acid biosynthesis; L-tryptophan biosynthesis; L-tryptophan from chorismate: step 5/5. Its function is as follows. The alpha subunit is responsible for the aldol cleavage of indoleglycerol phosphate to indole and glyceraldehyde 3-phosphate. The protein is Tryptophan synthase alpha chain of Bacillus pumilus (strain SAFR-032).